A 516-amino-acid polypeptide reads, in one-letter code: Phosphatidylserine decarboxylase proenzyme 2, mitochondrial (516 aa).

The transit peptide at 1–21 directs the protein to the mitochondrion; that stretch reads MRPRQRFRRFHPRWSKVNLRG. At 22–33 the chain is on the mitochondrial matrix side; sequence FGGVGALKGVKA. The chain crosses the membrane as a helical span at residues 34 to 52; it reads LNGMNVRVSMRLKWISNRI. Residues 53-516 lie on the Mitochondrial intermembrane side of the membrane; that stretch reads HRIRRSRRLG…GQYVRVGEAL (464 aa). Active-site charge relay system; for autoendoproteolytic cleavage activity residues include D159, H373, and S488. The Schiff-base intermediate with substrate; via pyruvic acid; for decarboxylase activity role is filled by S488. Residue S488 is modified to Pyruvic acid (Ser); by autocatalysis.

The protein belongs to the phosphatidylserine decarboxylase family. PSD-B subfamily. Eukaryotic type I sub-subfamily. In terms of assembly, heterodimer of a large membrane-associated beta subunit and a small pyruvoyl-containing alpha subunit. Pyruvate serves as cofactor. In terms of processing, is synthesized initially as an inactive proenzyme. Formation of the active enzyme involves a self-maturation process in which the active site pyruvoyl group is generated from an internal serine residue via an autocatalytic post-translational modification. Two non-identical subunits are generated from the proenzyme in this reaction, and the pyruvate is formed at the N-terminus of the alpha chain, which is derived from the carboxyl end of the proenzyme. The autoendoproteolytic cleavage occurs by a canonical serine protease mechanism, in which the side chain hydroxyl group of the serine supplies its oxygen atom to form the C-terminus of the beta chain, while the remainder of the serine residue undergoes an oxidative deamination to produce ammonia and the pyruvoyl prosthetic group on the alpha chain. During this reaction, the Ser that is part of the protease active site of the proenzyme becomes the pyruvoyl prosthetic group, which constitutes an essential element of the active site of the mature decarboxylase.

The protein resides in the mitochondrion. It is found in the mitochondrion inner membrane. The protein localises to the nucleus envelope. It localises to the lipid droplet. Its subcellular location is the endoplasmic reticulum membrane. The enzyme catalyses a 1,2-diacyl-sn-glycero-3-phospho-L-serine + H(+) = a 1,2-diacyl-sn-glycero-3-phosphoethanolamine + CO2. It participates in phospholipid metabolism; phosphatidylethanolamine biosynthesis; phosphatidylethanolamine from CDP-diacylglycerol: step 2/2. Catalyzes the formation of phosphatidylethanolamine (PtdEtn) from phosphatidylserine (PtdSer). Plays a central role in phospholipid metabolism and in the interorganelle trafficking of phosphatidylserine. Together with psd1 and psd3, responsible for the majority of phosphatidylethanolamine synthesis. Plays a role in lipid droplet biogenesis at the endoplasmic reticulum membrane. The polypeptide is Phosphatidylserine decarboxylase proenzyme 2, mitochondrial (Schizosaccharomyces pombe (strain 972 / ATCC 24843) (Fission yeast)).